The primary structure comprises 201 residues: Musculin (201 aa).

Disordered stretches follow at residues 1 to 108 (MSTG…NAAN) and 182 to 201 (RPDSDSKDVSAANRLCGTSA). A compositionally biased stretch (acidic residues) spans 46–56 (SAEEEDGEEEP). Positions 66–71 (KRKRLR) match the Nuclear localization signal motif. The segment covering 74 to 86 (DAGGAGGRAGGAG) has biased composition (gly residues). In terms of domain architecture, bHLH spans 102–154 (SQRNAANARERARMRVLSKAFSRLKTSLPWVPPDTKLSKLDTLRLASSYIAHL).

In terms of assembly, efficient DNA binding requires dimerization with another bHLH protein. Binds DNA as a homodimer or a heterodimer. Forms a heterodimer with TCF3.

Its subcellular location is the nucleus. Its function is as follows. Transcription repressor that blocks myogenesis and activation of E-box dependent muscle genes. The sequence is that of Musculin (Msc) from Mus musculus (Mouse).